A 728-amino-acid chain; its full sequence is Elongation factor 2 (728 aa).

The tr-type G domain maps to 19-261 (EQIRNIAIAA…MVAEHFPNPI (243 aa)). GTP contacts are provided by residues 28 to 35 (AHVDHGKT), 94 to 98 (DTPGH), and 148 to 151 (NKVD). The residue at position 596 (His596) is a Diphthamide.

This sequence belongs to the TRAFAC class translation factor GTPase superfamily. Classic translation factor GTPase family. EF-G/EF-2 subfamily.

The protein localises to the cytoplasm. In terms of biological role, catalyzes the GTP-dependent ribosomal translocation step during translation elongation. During this step, the ribosome changes from the pre-translocational (PRE) to the post-translocational (POST) state as the newly formed A-site-bound peptidyl-tRNA and P-site-bound deacylated tRNA move to the P and E sites, respectively. Catalyzes the coordinated movement of the two tRNA molecules, the mRNA and conformational changes in the ribosome. This is Elongation factor 2 from Halobacterium salinarum (strain ATCC 29341 / DSM 671 / R1).